A 483-amino-acid polypeptide reads, in one-letter code: Glutamate--tRNA ligase (483 aa).

Residues 11–21 carry the 'HIGH' region motif; sequence PSPTGHLHIGN. Residues C108, C110, C135, and H137 each coordinate Zn(2+). The 'KMSKS' region signature appears at 252–256; it reads KLSKR. K255 contributes to the ATP binding site.

It belongs to the class-I aminoacyl-tRNA synthetase family. Glutamate--tRNA ligase type 1 subfamily. Monomer. Requires Zn(2+) as cofactor.

The protein localises to the cytoplasm. It catalyses the reaction tRNA(Glu) + L-glutamate + ATP = L-glutamyl-tRNA(Glu) + AMP + diphosphate. Functionally, catalyzes the attachment of glutamate to tRNA(Glu) in a two-step reaction: glutamate is first activated by ATP to form Glu-AMP and then transferred to the acceptor end of tRNA(Glu). The protein is Glutamate--tRNA ligase of Bacillus pumilus (strain SAFR-032).